We begin with the raw amino-acid sequence, 152 residues long: Clitocypin-5 (152 aa).

In terms of assembly, homodimer.

Its function is as follows. Binds and inhibits cysteine proteinases. Inhibits most strongly papain and cathepsin L, more weakly bromelain and cathepsin B while it is completely ineffective against cathepsin H. The sequence is that of Clitocypin-5 (clt5) from Clitocybe nebularis (Clouded agaric).